A 245-amino-acid polypeptide reads, in one-letter code: tRNA (guanine-N(1)-)-methyltransferase (245 aa).

S-adenosyl-L-methionine contacts are provided by residues G111 and 131–136 (IGDYVL).

It belongs to the RNA methyltransferase TrmD family. As to quaternary structure, homodimer.

It is found in the cytoplasm. It catalyses the reaction guanosine(37) in tRNA + S-adenosyl-L-methionine = N(1)-methylguanosine(37) in tRNA + S-adenosyl-L-homocysteine + H(+). Its function is as follows. Specifically methylates guanosine-37 in various tRNAs. This is tRNA (guanine-N(1)-)-methyltransferase from Caldicellulosiruptor saccharolyticus (strain ATCC 43494 / DSM 8903 / Tp8T 6331).